The chain runs to 496 residues: GTPase Der (496 aa).

EngA-type G domains are found at residues 3–168 and 210–383; these read PIIA…VPEK and IKLA…DCST. Residues 9-16, 56-60, 120-123, 216-223, 263-267, and 328-331 each bind GTP; these read GRPNVGKS, DTGGI, NKID, DTAGV, and NKWD. Positions 384-468 constitute a KH-like domain; it reads KRINTSLLTR…PIRIQFKESE (85 aa).

The protein belongs to the TRAFAC class TrmE-Era-EngA-EngB-Septin-like GTPase superfamily. EngA (Der) GTPase family. In terms of assembly, associates with the 50S ribosomal subunit.

In terms of biological role, GTPase that plays an essential role in the late steps of ribosome biogenesis. The protein is GTPase Der of Hamiltonella defensa subsp. Acyrthosiphon pisum (strain 5AT).